The primary structure comprises 216 residues: Ribosomal RNA small subunit methyltransferase G (216 aa).

S-adenosyl-L-methionine contacts are provided by residues glycine 82, leucine 87, 135–136, and arginine 148; that span reads AE.

It belongs to the methyltransferase superfamily. RNA methyltransferase RsmG family.

The protein localises to the cytoplasm. It catalyses the reaction guanosine(527) in 16S rRNA + S-adenosyl-L-methionine = N(7)-methylguanosine(527) in 16S rRNA + S-adenosyl-L-homocysteine. In terms of biological role, specifically methylates the N7 position of guanine in position 527 of 16S rRNA. In Caulobacter vibrioides (strain ATCC 19089 / CIP 103742 / CB 15) (Caulobacter crescentus), this protein is Ribosomal RNA small subunit methyltransferase G.